The chain runs to 734 residues: MATKFPKFSQDLAQDPTTRRIWYGIATAHDFESHDGMTEENLYQKIFASHFGHLAIIFLWVSGNLFHVAWQGNFEQWSQDPLHVRPIAHAIWDPHFGQGAIDAFTQAGASSPVNVAYSGVYHWWYTIGMRTNGDLYQGSIFLLILSALFLFAGWLHLQPKFRPSLSWFKNAESRLNHHLAGLFGFSSLAWTGHLVHVAIPEARGQHVGWDNFLSTLPHPAGLAPFFTGNWSVYAENPDTASHAFGTAEGAGTAILTFLGGFHPQTEALWLTDIAHHHLAIAVIFIIAGHMYRTNFGIGHSIKEILEAHKPPAGGLGAGHKGLYETLNNSLHFQLALALASLGVVTSLVAQHMYSMPPYAFIAKDYTTMAALYTHHQYIATFIMCGAFAHGAIFLIRDYDPEANKNNVLARVLEHKEAIISHLSWVSLFLGFHTLGLYVHNDVVVAFGTPEKQILIEPVFAQFVQAASGKALYGFNVLLANADSAATAASLGTYLPNWLDAINSGKTALFLPIGPGDFLVHHAIALGLHTTTLILVKGALDARGSKLMPDKKDFGYSFPCDGPGRGGTCDISAWDAFYLAVFWALNTVGWVTFYWHWKNLTVWQGNVAQFNESSTYLMGWLRDYLWLNSSQLINGYNPFGTNNLSVWSWMFLFGHLIWATGFMFLISWRGYWQELIETIVWAHQRTPLANIVGWKDKPVALSIVQARVVGLAHFTVGYFLTYAAFLIASTAGKFG.

Transmembrane regions (helical) follow at residues 46–69, 135–158, 175–199, 273–291, 330–353, 369–395, 417–439, and 517–535; these read IFAS…FHVA, LYQG…LHLQ, LNHH…HVAI, IAHH…GHMY, LHFQ…QHMY, AALY…IFLI, AIIS…LYVH, and FLVH…LILV. The [4Fe-4S] cluster site is built by Cys559 and Cys568. Helical transmembrane passes span 575–596 and 643–665; these read AFYL…YWHW and LSVW…MFLI. Chlorophyll a-binding residues include His654, Met662, and Tyr670. Trp671 lines the phylloquinone pocket. A helical transmembrane segment spans residues 707–727; sequence VVGLAHFTVGYFLTYAAFLIA.

This sequence belongs to the PsaA/PsaB family. The PsaA/B heterodimer binds the P700 chlorophyll special pair and subsequent electron acceptors. PSI consists of a core antenna complex that captures photons, and an electron transfer chain that converts photonic excitation into a charge separation. The cyanobacterial PSI reaction center is composed of one copy each of PsaA,B,C,D,E,F,I,J,K,L,M and X, and forms trimeric complexes. It depends on PSI electron transfer chain: 5 chlorophyll a, 1 chlorophyll a', 2 phylloquinones and 3 4Fe-4S clusters. PSI core antenna: 90 chlorophyll a, 22 carotenoids, 3 phospholipids and 1 galactolipid. P700 is a chlorophyll a/chlorophyll a' dimer, A0 is one or more chlorophyll a, A1 is one or both phylloquinones and FX is a shared 4Fe-4S iron-sulfur center. as a cofactor.

Its subcellular location is the cellular thylakoid membrane. It carries out the reaction reduced [plastocyanin] + hnu + oxidized [2Fe-2S]-[ferredoxin] = oxidized [plastocyanin] + reduced [2Fe-2S]-[ferredoxin]. Its function is as follows. PsaA and PsaB bind P700, the primary electron donor of photosystem I (PSI), as well as the electron acceptors A0, A1 and FX. PSI is a plastocyanin/cytochrome c6-ferredoxin oxidoreductase, converting photonic excitation into a charge separation, which transfers an electron from the donor P700 chlorophyll pair to the spectroscopically characterized acceptors A0, A1, FX, FA and FB in turn. Oxidized P700 is reduced on the lumenal side of the thylakoid membrane by plastocyanin or cytochrome c6. The protein is Photosystem I P700 chlorophyll a apoprotein A2 of Synechococcus elongatus (strain ATCC 33912 / PCC 7942 / FACHB-805) (Anacystis nidulans R2).